We begin with the raw amino-acid sequence, 448 residues long: MSPLECSECFGDQLLHRTYTWQLTLHSRPNFTRKRDTRSESLEIPINVVLPQRGTAEPFPRLHNLHSIPRCAQQAALPRLSRRMASQHSYPLNRFSSVPLDPMERPMSQADLELDYNPPRVQLSDEMFVFQDGRWVNENCRLQSPYFSPSASFHHKLHHKRLAKEFVLQEENKSLREENKALREENRMLRKENKILQVFWEEHKASLGREESRPPSPLPQKDSASLEVVKKDHVALQVPRGKEDSTLQLLREENRALQQLLEQKQAYWTQTEDAAAPAEESKPAPSPHEEPCSPGLLQDQGSGLSSHFEEPRGPPAPQEDSKTLRALREMVSNMSGPSGEEEAKAGPGLPDGCQPLQLLREMRQALQALLKENRLLQEENRTLQVLRAEHRGFQEENKALWENNKLKLQQKLVIDTVTEVTARMEMLIEELYAFMPGRSQDPKKPSRV.

Phosphoserine is present on residues Ser41, Ser86, Ser89, Ser97, Ser124, Ser144, Ser148, and Ser150. A coiled-coil region spans residues Ala163 to Val198. The interval Ser206–Leu226 is disordered. Phosphoserine occurs at positions 212 and 225. Residues Lys242–Tyr267 adopt a coiled-coil conformation. The disordered stretch occupies residues Gln270–Ser321. Residues Glu279–Pro291 are compositionally biased toward basic and acidic residues. Phosphoserine is present on residues Ser335 and Ser338. Positions Leu356–Ile414 form a coiled coil.

This sequence belongs to the chibby family. SPERT subfamily. As to quaternary structure, homodimer. Binds to NEK1.

The chain is Protein chibby homolog 2 (CBY2) from Macaca fascicularis (Crab-eating macaque).